We begin with the raw amino-acid sequence, 562 residues long: BOS complex subunit NCLN (562 aa).

The N-terminal stretch at 1 to 41 (MLEEAGEVLESVLKASCLPLSFLLFVPAVLLLLGPPPAAEA) is a signal peptide. Residues 42 to 521 (AHESTVYRMQ…VMNAYRVKPA (480 aa)) are Extracellular-facing. Asn-240 carries N-linked (GlcNAc...) asparagine glycosylation. The tract at residues 420 to 447 (GFDEGHLQPNREGSTCRSADLHGSDADP) is disordered. A helical transmembrane segment spans residues 522–542 (IFDLLLAVCIAAYLGVAYVAV). Topologically, residues 543–562 (QNFGLLYRMIQRLSLKTKQQ) are cytoplasmic.

The protein belongs to the nicastrin family. In terms of assembly, component of the multi-pass translocon (MPT) complex.

The protein localises to the endoplasmic reticulum membrane. In terms of biological role, component of the multi-pass translocon (MPT) complex that mediates insertion of multi-pass membrane proteins into the lipid bilayer of membranes. The MPT complex takes over after the SEC61 complex: following membrane insertion of the first few transmembrane segments of proteins by the SEC61 complex, the MPT complex occludes the lateral gate of the SEC61 complex to promote insertion of subsequent transmembrane regions. May antagonize Nodal signaling and subsequent organization of axial structures during mesodermal patterning, via its interaction with NOMO. This is BOS complex subunit NCLN (NCLN) from Gallus gallus (Chicken).